A 180-amino-acid chain; its full sequence is GTP cyclohydrolase 1 (180 aa).

The Zn(2+) site is built by C71, H74, and C142.

It belongs to the GTP cyclohydrolase I family. As to quaternary structure, toroid-shaped homodecamer, composed of two pentamers of five dimers.

The catalysed reaction is GTP + H2O = 7,8-dihydroneopterin 3'-triphosphate + formate + H(+). The protein operates within cofactor biosynthesis; 7,8-dihydroneopterin triphosphate biosynthesis; 7,8-dihydroneopterin triphosphate from GTP: step 1/1. The chain is GTP cyclohydrolase 1 from Helicobacter acinonychis (strain Sheeba).